The chain runs to 328 residues: Malate dehydrogenase (328 aa).

12 to 18 (GAAGQIG) contacts NAD(+). Positions 95 and 101 each coordinate substrate. NAD(+) is bound by residues asparagine 108, glutamine 115, and 132-134 (VGN). Asparagine 134 and arginine 165 together coordinate substrate. Catalysis depends on histidine 190, which acts as the Proton acceptor.

It belongs to the LDH/MDH superfamily. MDH type 2 family.

The enzyme catalyses (S)-malate + NAD(+) = oxaloacetate + NADH + H(+). Its function is as follows. Catalyzes the reversible oxidation of malate to oxaloacetate. The chain is Malate dehydrogenase from Delftia acidovorans (strain DSM 14801 / SPH-1).